The chain runs to 485 residues: Glucose-6-phosphate 1-dehydrogenase (485 aa).

NADP(+)-binding positions include arginine 46, 89–90 (DI), and lysine 144. Residues histidine 174, lysine 178, glutamate 212, and aspartate 231 each coordinate substrate. The Proton acceptor role is filled by histidine 236. Lysine 334 lines the substrate pocket.

This sequence belongs to the glucose-6-phosphate dehydrogenase family.

It carries out the reaction D-glucose 6-phosphate + NADP(+) = 6-phospho-D-glucono-1,5-lactone + NADPH + H(+). It participates in carbohydrate degradation; pentose phosphate pathway; D-ribulose 5-phosphate from D-glucose 6-phosphate (oxidative stage): step 1/3. Functionally, catalyzes the oxidation of glucose 6-phosphate to 6-phosphogluconolactone. The chain is Glucose-6-phosphate 1-dehydrogenase from Zymomonas mobilis subsp. mobilis (strain ATCC 31821 / ZM4 / CP4).